Reading from the N-terminus, the 370-residue chain is 3-dehydroquinate synthase (370 aa).

NAD(+)-binding positions include 112–116 (GVVGD), 136–137 (TS), K149, K158, and 176–179 (TLRT). Zn(2+) contacts are provided by E191, H254, and H276.

It belongs to the sugar phosphate cyclases superfamily. Dehydroquinate synthase family. The cofactor is Co(2+). Zn(2+) is required as a cofactor. Requires NAD(+) as cofactor.

It localises to the cytoplasm. The catalysed reaction is 7-phospho-2-dehydro-3-deoxy-D-arabino-heptonate = 3-dehydroquinate + phosphate. The protein operates within metabolic intermediate biosynthesis; chorismate biosynthesis; chorismate from D-erythrose 4-phosphate and phosphoenolpyruvate: step 2/7. Its function is as follows. Catalyzes the conversion of 3-deoxy-D-arabino-heptulosonate 7-phosphate (DAHP) to dehydroquinate (DHQ). The chain is 3-dehydroquinate synthase from Xanthomonas oryzae pv. oryzae (strain MAFF 311018).